A 208-amino-acid chain; its full sequence is ATP synthase subunit b 1 (208 aa).

A compositionally biased stretch (polar residues) spans 1–18; the sequence is MFVSTAFAQTATESQPAS. The interval 1 to 26 is disordered; that stretch reads MFVSTAFAQTATESQPASTAGEHGAA. Residues 56-78 traverse the membrane as a helical segment; sequence SQVLWLAITFGLFYLFLSRVVLP.

It belongs to the ATPase B chain family. F-type ATPases have 2 components, F(1) - the catalytic core - and F(0) - the membrane proton channel. F(1) has five subunits: alpha(3), beta(3), gamma(1), delta(1), epsilon(1). F(0) has three main subunits: a(1), b(2) and c(10-14). The alpha and beta chains form an alternating ring which encloses part of the gamma chain. F(1) is attached to F(0) by a central stalk formed by the gamma and epsilon chains, while a peripheral stalk is formed by the delta and b chains.

The protein localises to the cell inner membrane. In terms of biological role, f(1)F(0) ATP synthase produces ATP from ADP in the presence of a proton or sodium gradient. F-type ATPases consist of two structural domains, F(1) containing the extramembraneous catalytic core and F(0) containing the membrane proton channel, linked together by a central stalk and a peripheral stalk. During catalysis, ATP synthesis in the catalytic domain of F(1) is coupled via a rotary mechanism of the central stalk subunits to proton translocation. Its function is as follows. Component of the F(0) channel, it forms part of the peripheral stalk, linking F(1) to F(0). In Brucella abortus (strain 2308), this protein is ATP synthase subunit b 1.